A 66-amino-acid chain; its full sequence is Large ribosomal subunit protein uL29 (66 aa).

This sequence belongs to the universal ribosomal protein uL29 family.

This chain is Large ribosomal subunit protein uL29, found in Thermococcus onnurineus (strain NA1).